Consider the following 537-residue polypeptide: Extracellular exo-inulinase inuE (537 aa).

Positions 1–19 (MARLLKAVTVCALAGIAHA) are cleaved as a signal peptide. The active site involves Asp-41. Residues Asn-49, Asn-67, Asn-112, Asn-300, Asn-363, Asn-398, Asn-430, and Asn-531 are each glycosylated (N-linked (GlcNAc...) asparagine).

The protein belongs to the glycosyl hydrolase 32 family.

The protein localises to the secreted. The catalysed reaction is Hydrolysis of terminal, non-reducing (2-&gt;1)- and (2-&gt;6)-linked beta-D-fructofuranose residues in fructans.. Its function is as follows. Exo-inulinase involved in utilization of the plant storage polymer inulin, consisting of fructooligosaccharides with a degree of polymerization (DP) value from 2 to 60. Splits off terminal fructose units successively from the non-reducing end of the inulin molecule, and also hydrolyze sucrose and raffinose. This Aspergillus niger (strain ATCC MYA-4892 / CBS 513.88 / FGSC A1513) protein is Extracellular exo-inulinase inuE (inuE).